The chain runs to 340 residues: MVEQIKDKLGRPIRDLRLSVTDRCNFRCDYCMPKEVFGDDFVFLPKNELLTFDEMARIAKVYAELGVKKIRITGGEPLMRRDLDVLIAKLNQIDGIEDIGLTTNGLLLKKHGQKLYDAGLRRINVSLDAIDDTLFQSINNRNIKATTILEQIDYATSIGLNVKVNVVIQKGINDDQIIPMLEYFKDKHIEIRFIEFMDVGNDNGWDFSKVVTKDEMLTMIEQHFEIDPVEPKYFGEVAKYYRHKDNGVQFGLITSVSQSFCSTCTRARLSSDGKFYGCLFATADGFNVKAFIRSGVTDEELKEQFKALWQIRDDRYSDERTAQTVANRQRKKINMNYIGG.

The Radical SAM core domain maps to 8 to 227; that stretch reads KLGRPIRDLR…TMIEQHFEID (220 aa). Arg17 contacts GTP. Residues Cys24 and Cys28 each contribute to the [4Fe-4S] cluster site. Tyr30 contributes to the S-adenosyl-L-methionine binding site. Position 31 (Cys31) interacts with [4Fe-4S] cluster. GTP is bound at residue Arg71. Residue Gly75 participates in S-adenosyl-L-methionine binding. Thr102 provides a ligand contact to GTP. Ser126 contributes to the S-adenosyl-L-methionine binding site. Lys163 contributes to the GTP binding site. Residue Met197 coordinates S-adenosyl-L-methionine. Residues Cys261 and Cys264 each coordinate [4Fe-4S] cluster. 266 to 268 serves as a coordination point for GTP; it reads RAR. Cys278 contacts [4Fe-4S] cluster.

Belongs to the radical SAM superfamily. MoaA family. Monomer and homodimer. [4Fe-4S] cluster serves as cofactor.

It catalyses the reaction GTP + AH2 + S-adenosyl-L-methionine = (8S)-3',8-cyclo-7,8-dihydroguanosine 5'-triphosphate + 5'-deoxyadenosine + L-methionine + A + H(+). Its pathway is cofactor biosynthesis; molybdopterin biosynthesis. Its function is as follows. Catalyzes the cyclization of GTP to (8S)-3',8-cyclo-7,8-dihydroguanosine 5'-triphosphate. This is GTP 3',8-cyclase from Staphylococcus aureus (strain MRSA252).